The chain runs to 549 residues: Oxygen-dependent choline dehydrogenase (549 aa).

Position 4–33 (4–33) interacts with FAD; the sequence is DFVIIGSGSAGSAMAYRLSEDGRYSVIVIE. The Proton acceptor role is filled by H465.

The protein belongs to the GMC oxidoreductase family. It depends on FAD as a cofactor.

The enzyme catalyses choline + A = betaine aldehyde + AH2. It catalyses the reaction betaine aldehyde + NAD(+) + H2O = glycine betaine + NADH + 2 H(+). It participates in amine and polyamine biosynthesis; betaine biosynthesis via choline pathway; betaine aldehyde from choline (cytochrome c reductase route): step 1/1. Its function is as follows. Involved in the biosynthesis of the osmoprotectant glycine betaine. Catalyzes the oxidation of choline to betaine aldehyde and betaine aldehyde to glycine betaine at the same rate. The chain is Oxygen-dependent choline dehydrogenase from Brucella ovis (strain ATCC 25840 / 63/290 / NCTC 10512).